The sequence spans 174 residues: MEWKDIKGYEGHYQVSNTGEVYSIKSGKTLKHQIPKDGYHRIGLFKGGKGKTFQVHRLVAIHFCEGYEEGLVVDHKDGNKDNNLSTNLRWVTQKINVENQMSRGTLNVSKAQQIAKIKNQKPIIVISPDGIEKEYPSTKCACEELGLTRGKVTDVLKGHRIHHKGYTFRYKLNG.

The chain is DNA endonuclease I-HmuI from Bacillus subtilis (Bacteriophage SP01).